A 291-amino-acid chain; its full sequence is Probable 2-(5''-triphosphoribosyl)-3'-dephosphocoenzyme-A synthase (291 aa).

This sequence belongs to the CitG/MdcB family.

The catalysed reaction is 3'-dephospho-CoA + ATP = 2'-(5''-triphospho-alpha-D-ribosyl)-3'-dephospho-CoA + adenine. Functionally, involved in the formation of 2-(5''-phosphoribosyl)-3'-dephosphocoenzyme-A, the prosthetic group of the acyl-carrier protein of the malonate decarboxylase. In Pseudomonas syringae pv. tomato (strain ATCC BAA-871 / DC3000), this protein is Probable 2-(5''-triphosphoribosyl)-3'-dephosphocoenzyme-A synthase.